We begin with the raw amino-acid sequence, 502 residues long: Phenylacetaldehyde dehydrogenase (502 aa).

Position 251-256 (251-256) interacts with NAD(+); that stretch reads GSTEVG. Residues Glu273 and Cys307 contribute to the active site.

This sequence belongs to the aldehyde dehydrogenase family.

The catalysed reaction is 2-phenylacetaldehyde + NAD(+) + H2O = 2-phenylacetate + NADH + 2 H(+). The protein operates within aromatic compound metabolism. Phenylacetaldehyde dehydrogenase that catalyzes the last step in the aerobic styrene degradation pathway by mediating oxidation of phenylacetaldehyde to phenylacetic acid. This Pseudomonas fluorescens protein is Phenylacetaldehyde dehydrogenase (styD).